The primary structure comprises 372 residues: MRSKVTGAQRWVVKIGSALLTADGKGLDRNAMGVWVEQMVALHEAGVELVLVSSGAVAAGMSRLGWTARPSAMHELQAAAAIGQMGLVQAWESSFAEHGRHTAQILLTHDDLSDRKRYLNARSTLRTLVELGVVPVINENDTVVTDEIRFGDNDTLAALVANLVEADLLVILTDRDGMFDADPRNNPDAQLIYEARADDPALDAVAGGTGGALGRGGMQTKLRAARLAARSGAHTVIVGGRIERVLARLKGGERLGTLLSPEREMLAARKQWLAGHLQTRGTLVLDDGAVSALASDHKSLLPVGVKLVQGSFRRGEMVVCVAPDGREIARGLSNYSAIEAQKIIGHSSEAIVRELGYMAEPELIHRDNLILV.

An ATP-binding site is contributed by lysine 14. Residues serine 54, aspartate 141, and asparagine 153 each coordinate substrate. 173–174 provides a ligand contact to ATP; sequence TD. A PUA domain is found at 280 to 358; that stretch reads RGTLVLDDGA…EAIVRELGYM (79 aa).

It belongs to the glutamate 5-kinase family.

It localises to the cytoplasm. It catalyses the reaction L-glutamate + ATP = L-glutamyl 5-phosphate + ADP. Its pathway is amino-acid biosynthesis; L-proline biosynthesis; L-glutamate 5-semialdehyde from L-glutamate: step 1/2. Its function is as follows. Catalyzes the transfer of a phosphate group to glutamate to form L-glutamate 5-phosphate. In Pseudomonas syringae pv. tomato (strain ATCC BAA-871 / DC3000), this protein is Glutamate 5-kinase.